The following is a 310-amino-acid chain: Glycine--tRNA ligase alpha subunit (310 aa).

The protein belongs to the class-II aminoacyl-tRNA synthetase family. In terms of assembly, tetramer of two alpha and two beta subunits.

The protein localises to the cytoplasm. It carries out the reaction tRNA(Gly) + glycine + ATP = glycyl-tRNA(Gly) + AMP + diphosphate. In Aliivibrio salmonicida (strain LFI1238) (Vibrio salmonicida (strain LFI1238)), this protein is Glycine--tRNA ligase alpha subunit.